The following is a 403-amino-acid chain: Phosphopentomutase (403 aa).

Mn(2+)-binding residues include aspartate 13, aspartate 298, histidine 303, aspartate 339, histidine 340, and histidine 351.

This sequence belongs to the phosphopentomutase family. It depends on Mn(2+) as a cofactor.

The protein localises to the cytoplasm. The enzyme catalyses 2-deoxy-alpha-D-ribose 1-phosphate = 2-deoxy-D-ribose 5-phosphate. It carries out the reaction alpha-D-ribose 1-phosphate = D-ribose 5-phosphate. It participates in carbohydrate degradation; 2-deoxy-D-ribose 1-phosphate degradation; D-glyceraldehyde 3-phosphate and acetaldehyde from 2-deoxy-alpha-D-ribose 1-phosphate: step 1/2. Isomerase that catalyzes the conversion of deoxy-ribose 1-phosphate (dRib-1-P) and ribose 1-phosphate (Rib-1-P) to deoxy-ribose 5-phosphate (dRib-5-P) and ribose 5-phosphate (Rib-5-P), respectively. This chain is Phosphopentomutase, found in Streptococcus pyogenes serotype M28 (strain MGAS6180).